The following is a 577-amino-acid chain: Protein GPR108 (577 aa).

The N-terminal stretch at 1–34 is a signal peptide; that stretch reads MAVSERRGLSGESPAQCRWEYLSLLVLMLSGCSG. Residues Asn59 and Asn111 are each glycosylated (N-linked (GlcNAc...) asparagine). A disordered region spans residues 144 to 224; the sequence is LLPEAPSQSG…TRGPSGKEKD (81 aa). Residues Asn233 and Asn237 are each glycosylated (N-linked (GlcNAc...) asparagine). 7 consecutive transmembrane segments (helical) span residues 296-316, 325-345, 369-389, 400-420, 434-454, 482-502, and 506-526; these read LYLI…SVLC, IHWL…FHSI, LLKG…WAFV, IFGI…VIES, ILFL…VWSI, VMVI…RVAV, and WQWL…VLTG.

It belongs to the LU7TM family.

The protein resides in the golgi apparatus. Its subcellular location is the cis-Golgi network membrane. The protein localises to the trans-Golgi network membrane. It is found in the golgi apparatus membrane. May play a role in intracellular immune modulation by activating NF-kappaB response and attenuating Toll-like-receptor response. This Rattus norvegicus (Rat) protein is Protein GPR108 (Gpr108).